A 95-amino-acid polypeptide reads, in one-letter code: MSISREDIEKVAVLARIKVDGEQVSALEKDLGNILDLVDQLSAADTDAVEPMAHPLDAVQKLRPDVVTETNQREAFQAIAPATEDGLYLVPRVIE.

Belongs to the GatC family. As to quaternary structure, heterotrimer of A, B and C subunits.

The enzyme catalyses L-glutamyl-tRNA(Gln) + L-glutamine + ATP + H2O = L-glutaminyl-tRNA(Gln) + L-glutamate + ADP + phosphate + H(+). It carries out the reaction L-aspartyl-tRNA(Asn) + L-glutamine + ATP + H2O = L-asparaginyl-tRNA(Asn) + L-glutamate + ADP + phosphate + 2 H(+). Its function is as follows. Allows the formation of correctly charged Asn-tRNA(Asn) or Gln-tRNA(Gln) through the transamidation of misacylated Asp-tRNA(Asn) or Glu-tRNA(Gln) in organisms which lack either or both of asparaginyl-tRNA or glutaminyl-tRNA synthetases. The reaction takes place in the presence of glutamine and ATP through an activated phospho-Asp-tRNA(Asn) or phospho-Glu-tRNA(Gln). The chain is Aspartyl/glutamyl-tRNA(Asn/Gln) amidotransferase subunit C from Marinobacter nauticus (strain ATCC 700491 / DSM 11845 / VT8) (Marinobacter aquaeolei).